Here is a 140-residue protein sequence, read N- to C-terminus: MNLEALCKEAELSFYDDELVSENGKKIYRIYVQKEGGVNLDDCARLSEILSPIFDVEPPVNGEYFLEVSSPGLERKLSKIEHFAKSIGELVKITTNEKEKIEAKIIAVDDENITLENLENKEKTTINFNDIKKARTFMEW.

The protein belongs to the RimP family.

Its subcellular location is the cytoplasm. Its function is as follows. Required for maturation of 30S ribosomal subunits. The chain is Ribosome maturation factor RimP from Campylobacter jejuni subsp. doylei (strain ATCC BAA-1458 / RM4099 / 269.97).